The primary structure comprises 468 residues: Soluble pyridine nucleotide transhydrogenase (468 aa).

Residue 38–47 (ERHYNVGGGC) participates in FAD binding.

The protein belongs to the class-I pyridine nucleotide-disulfide oxidoreductase family. It depends on FAD as a cofactor.

The protein resides in the cytoplasm. The catalysed reaction is NAD(+) + NADPH = NADH + NADP(+). In terms of biological role, conversion of NADPH, generated by peripheral catabolic pathways, to NADH, which can enter the respiratory chain for energy generation. The protein is Soluble pyridine nucleotide transhydrogenase of Pectobacterium atrosepticum (strain SCRI 1043 / ATCC BAA-672) (Erwinia carotovora subsp. atroseptica).